We begin with the raw amino-acid sequence, 272 residues long: Indole-3-glycerol phosphate synthase (272 aa).

It belongs to the TrpC family.

The enzyme catalyses 1-(2-carboxyphenylamino)-1-deoxy-D-ribulose 5-phosphate + H(+) = (1S,2R)-1-C-(indol-3-yl)glycerol 3-phosphate + CO2 + H2O. The protein operates within amino-acid biosynthesis; L-tryptophan biosynthesis; L-tryptophan from chorismate: step 4/5. This chain is Indole-3-glycerol phosphate synthase, found in Mycobacterium ulcerans (strain Agy99).